The following is a 507-amino-acid chain: Cytochrome P450 monooxygenase cloA (507 aa).

A helical transmembrane segment spans residues 15–35 (WTWILLTTCIALISPLVLKGI). An N-linked (GlcNAc...) asparagine glycan is attached at Asn247. Cys450 serves as a coordination point for heme.

Belongs to the cytochrome P450 family. It depends on heme as a cofactor.

It is found in the membrane. Its pathway is alkaloid biosynthesis; ergot alkaloid biosynthesis. Cytochrome P450 monooxygenase; part of the gene cluster that mediates the biosynthesis of fungal ergot alkaloid. DmaW catalyzes the first step of ergot alkaloid biosynthesis by condensing dimethylallyl diphosphate (DMAP) and tryptophan to form 4-dimethylallyl-L-tryptophan. The second step is catalyzed by the methyltransferase easF that methylates 4-dimethylallyl-L-tryptophan in the presence of S-adenosyl-L-methionine, resulting in the formation of 4-dimethylallyl-L-abrine. The catalase easC and the FAD-dependent oxidoreductase easE then transform 4-dimethylallyl-L-abrine to chanoclavine-I which is further oxidized by easD in the presence of NAD(+), resulting in the formation of chanoclavine-I aldehyde. Agroclavine dehydrogenase easG then mediates the conversion of chanoclavine-I aldehyde to agroclavine via a non-enzymatic adduct reaction: the substrate is an iminium intermediate that is formed spontaneously from chanoclavine-I aldehyde in the presence of glutathione. The presence of easA is not required to complete this reaction. Further conversion of agroclavine to paspalic acid is a two-step process involving oxidation of agroclavine to elymoclavine and of elymoclavine to paspalic acid, the second step being performed by the elymoclavine oxidase cloA. Paspalic acid is then further converted to D-lysergic acid. Ergopeptines are assembled from D-lysergic acid and three different amino acids by the D-lysergyl-peptide-synthetases composed each of a monomudular and a trimodular nonribosomal peptide synthetase subunit. LpsB and lpsC encode the monomodular subunits responsible for D-lysergic acid activation and incorporation into the ergopeptine backbone. LpsA1 and A2 subunits encode the trimodular nonribosomal peptide synthetase assembling the tripeptide portion of ergopeptines. LpsA1 is responsible for formation of the major ergopeptine, ergotamine, and lpsA2 for alpha-ergocryptine, the minor ergopeptine of the total alkaloid mixture elaborated by C.purpurea. D-lysergyl-tripeptides are assembled by the nonribosomal peptide synthetases and released as N-(D-lysergyl-aminoacyl)-lactams. Cyclolization of the D-lysergyl-tripeptides is performed by the Fe(2+)/2-ketoglutarate-dependent dioxygenase easH which introduces a hydroxyl group into N-(D-lysergyl-aminoacyl)-lactam at alpha-C of the aminoacyl residue followed by spontaneous condensation with the terminal lactam carbonyl group. This is Cytochrome P450 monooxygenase cloA from Claviceps purpurea (strain 20.1) (Ergot fungus).